A 208-amino-acid polypeptide reads, in one-letter code: Small ribosomal subunit protein uS4 (208 aa).

Residues 98–158 (RRLDNIAYRL…EKSRKVACIN (61 aa)) enclose the S4 RNA-binding domain.

It belongs to the universal ribosomal protein uS4 family. As to quaternary structure, part of the 30S ribosomal subunit. Contacts protein S5. The interaction surface between S4 and S5 is involved in control of translational fidelity.

Functionally, one of the primary rRNA binding proteins, it binds directly to 16S rRNA where it nucleates assembly of the body of the 30S subunit. Its function is as follows. With S5 and S12 plays an important role in translational accuracy. This is Small ribosomal subunit protein uS4 from Geotalea uraniireducens (strain Rf4) (Geobacter uraniireducens).